We begin with the raw amino-acid sequence, 47 residues long: Large ribosomal subunit protein bL33 (47 aa).

It belongs to the bacterial ribosomal protein bL33 family.

In Staphylococcus saprophyticus, this protein is Large ribosomal subunit protein bL33.